The chain runs to 403 residues: Zinc finger HIT domain-containing protein 2 (403 aa).

The residue at position 1 (Met-1) is an N-acetylmethionine. Residues Cys-7, Cys-10, Cys-22, Cys-25, Cys-30, Cys-34, His-38, and Cys-41 each contribute to the Zn(2+) site. The HIT-type zinc-finger motif lies at 7-41 (CGFCPAGEVQPARYTCPRCNAPYCSLRCYRTHGTC). Positions 72-98 (RQQRETEDEPGEAGLSSGPAPGGLSGL) are disordered. A Phosphothreonine modification is found at Thr-161.

Interacts (via HIT-type zinc finger) with RUVBL2 in the presence of ATP or ADP; shows a stronger interaction in the presence of ADP. As to expression, low expression in most tissues; highly expressed in testis.

Its function is as follows. May act as a bridging factor mediating the interaction between the R2TP/Prefoldin-like (R2TP/PFDL) complex and U5 small nuclear ribonucleoprotein (U5 snRNP). Required for the interaction of R2TP complex subunit RPAP3 and prefoldin-like subunit URI1 with U5 snRNP proteins EFTUD2 and PRPF8. May play a role in regulating the composition of the U5 snRNP complex. This chain is Zinc finger HIT domain-containing protein 2 (ZNHIT2), found in Homo sapiens (Human).